The sequence spans 131 residues: MRHGNGLRKLNRTSSHRLAMFRNMAVSLITHEAIKTTLPKAKELRRVIEPLITLGKEPTLANKRLAFARLRDRDAVVKLFAEIGPRYANRNGGYTRVLKMGFRQGDNAPMAFMELVDRPEVDASEADSDAE.

Belongs to the bacterial ribosomal protein bL17 family. As to quaternary structure, part of the 50S ribosomal subunit. Contacts protein L32.

The polypeptide is Large ribosomal subunit protein bL17 (Bordetella parapertussis (strain 12822 / ATCC BAA-587 / NCTC 13253)).